Consider the following 689-residue polypeptide: Glycine--tRNA ligase beta subunit (689 aa).

The protein belongs to the class-II aminoacyl-tRNA synthetase family. Tetramer of two alpha and two beta subunits.

The protein localises to the cytoplasm. It catalyses the reaction tRNA(Gly) + glycine + ATP = glycyl-tRNA(Gly) + AMP + diphosphate. In Shigella dysenteriae serotype 1 (strain Sd197), this protein is Glycine--tRNA ligase beta subunit.